The sequence spans 167 residues: Outer envelope pore protein 21A, chloroplastic (167 aa).

Residues 1–21 are Cytoplasmic-facing; sequence METSLRYATNSRSLKIHAKEK. The beta stranded transmembrane segment at 22–31 threads the bilayer; that stretch reads FPVNSKTRLQ. The Chloroplast intermembrane segment spans residues 32 to 55; sequence LHGELDTGAGVPSYFCAMIRYFFH. The beta stranded transmembrane segment at 56-65 threads the bilayer; the sequence is EASTNLGVGL. Residues 66–71 are Cytoplasmic-facing; it reads HYDKRE. A beta stranded membrane pass occupies residues 72–81; that stretch reads KLRCLVRGKK. At 82–87 the chain is on the chloroplast intermembrane side; the sequence is KFPVIT. Residues 88–97 traverse the membrane as a beta stranded segment; it reads DEVVTFNIKG. The Cytoplasmic portion of the chain corresponds to 98–110; sequence RCDFDQDLVQRNA. The beta stranded transmembrane segment at 111–120 threads the bilayer; that stretch reads KGAAEFDWNI. The Chloroplast intermembrane portion of the chain corresponds to 121 to 127; it reads WKFQKDQ. Residues 128-137 form a beta stranded membrane-spanning segment; that stretch reads DLRLRIGYEM. Over 138-142 the chain is Cytoplasmic; that stretch reads FEKVP. A beta stranded transmembrane segment spans residues 143–152; that stretch reads YMQIRENNWT. Topologically, residues 153–158 are chloroplast intermembrane; sequence FNTNLK. Residues 159–167 traverse the membrane as a beta stranded segment; sequence GKWNVRYDL.

It belongs to the plastid outer envelope porin OEP21 (TC 1.B.29) family.

The protein resides in the plastid. It is found in the etioplast membrane. It localises to the chloroplast outer membrane. Functionally, voltage-dependent rectifying anion channel that facilitates the translocation between chloroplast and cytoplasm of phosphorylated carbohydrates such as triosephosphate, 3-phosphoglycerate and inorganic phosphate (Pi) depending of ATP to triosephosphate ratio in the plastidial intermembrane space; in high triosephosphate/ATP conditions (e.g. photosynthesis), export of triosphosphate from chloroplast (outward rectifying channels), but in high ATP/triosephosphate conditions (e.g. dark phase), import of phosphosolutes (inward rectifying channels). The chain is Outer envelope pore protein 21A, chloroplastic (OEP21A) from Arabidopsis thaliana (Mouse-ear cress).